The following is a 215-amino-acid chain: Probable Rab-related GTPase (215 aa).

Residue 20–27 (GSSGVGKS) coordinates GTP. The Effector region motif lies at 42–50 (VSPTIGAAF). GTP is bound by residues 69–73 (DTAGQ) and 127–130 (NKID). Residues Cys211 and Cys212 are each lipidated (S-geranylgeranyl cysteine; by host). Position 212 is a cysteine methyl ester; by host (Cys212). Residues 213–215 (YIS) constitute a propeptide, removed in mature form.

Belongs to the small GTPase superfamily. Rab family.

It localises to the host cell membrane. Its function is as follows. May be involved in protein transport. The protein is Probable Rab-related GTPase of Acanthamoeba polyphaga mimivirus (APMV).